The following is a 188-amino-acid chain: MATYYSNDFRAGLKIMMDGEPYAVEASEFVKPGKGQAFARVKLRRLLTGTRVEKTFKSTDSAEGADVVDMNLTYLYNDGEFYHFMNNTTFEQLSADEKAVGENAKWLLDQAECIVTLWNGQPISVTPPNFVELEIIETDPGLKGDTAGTGGKPAKLSTGAVVKVPLFVQTGEVIKVDTRSGEYVSRVK.

An N6-(3,6-diaminohexanoyl)-5-hydroxylysine modification is found at Lys34.

This sequence belongs to the elongation factor P family. May be beta-lysylated on the epsilon-amino group of Lys-34 by the combined action of EpmA and EpmB, and then hydroxylated on the C5 position of the same residue by EpmC (if this protein is present). Lysylation is critical for the stimulatory effect of EF-P on peptide-bond formation. The lysylation moiety may extend toward the peptidyltransferase center and stabilize the terminal 3-CCA end of the tRNA. Hydroxylation of the C5 position on Lys-34 may allow additional potential stabilizing hydrogen-bond interactions with the P-tRNA.

It is found in the cytoplasm. It participates in protein biosynthesis; polypeptide chain elongation. In terms of biological role, involved in peptide bond synthesis. Alleviates ribosome stalling that occurs when 3 or more consecutive Pro residues or the sequence PPG is present in a protein, possibly by augmenting the peptidyl transferase activity of the ribosome. Modification of Lys-34 is required for alleviation. The sequence is that of Elongation factor P from Enterobacter sp. (strain 638).